We begin with the raw amino-acid sequence, 218 residues long: 25 kDa calcium-binding protein (218 aa).

EF-hand domains follow at residues 24–59 (GAKT…AYKS), 66–101 (PSSD…YLTG), 128–163 (AKLD…TYAE), and 171–206 (PTKE…SLQK). Asp37, Arg43, Asp48, Asp79, Asn81, Asp83, Asp90, Asp141, Asp143, Ser145, Gln147, Glu152, Asp184, Asn186, Asp188, Ser190, and Glu195 together coordinate Ca(2+).

Functionally, expected to play a crucial role in calcium-dependent regulation of ciliary movement. The polypeptide is 25 kDa calcium-binding protein (Tetrahymena thermophila).